The primary structure comprises 184 residues: Ribosome-recycling factor (184 aa).

A disordered region spans residues 134-167; that stretch reads MNDQLKKDEKNGDITEDELRSGTEDVQKATDNSI.

This sequence belongs to the RRF family.

The protein localises to the cytoplasm. Its function is as follows. Responsible for the release of ribosomes from messenger RNA at the termination of protein biosynthesis. May increase the efficiency of translation by recycling ribosomes from one round of translation to another. The protein is Ribosome-recycling factor of Staphylococcus aureus (strain Mu3 / ATCC 700698).